The following is a 635-amino-acid chain: Threonine--tRNA ligase (635 aa).

The TGS domain occupies 1-61; that stretch reads MIKITLKDGK…HKDSSLEILT (61 aa). The catalytic stretch occupies residues 242–532; it reads DHRKLGKELD…LIEQYAGAFP (291 aa). Cysteine 333, histidine 384, and histidine 509 together coordinate Zn(2+).

This sequence belongs to the class-II aminoacyl-tRNA synthetase family. Homodimer. Requires Zn(2+) as cofactor.

It localises to the cytoplasm. The enzyme catalyses tRNA(Thr) + L-threonine + ATP = L-threonyl-tRNA(Thr) + AMP + diphosphate + H(+). In terms of biological role, catalyzes the attachment of threonine to tRNA(Thr) in a two-step reaction: L-threonine is first activated by ATP to form Thr-AMP and then transferred to the acceptor end of tRNA(Thr). Also edits incorrectly charged L-seryl-tRNA(Thr). This is Threonine--tRNA ligase from Clostridium botulinum (strain Loch Maree / Type A3).